Reading from the N-terminus, the 1823-residue chain is Vitellogenin (1823 aa).

The N-terminal stretch at 1 to 14 (MWKLLLVALAFALA) is a signal peptide. Gln17 carries the pyrrolidone carboxylic acid modification. The Vitellogenin domain occupies 18 to 658 (FQPGKVYRYS…SPSGPLPRAV (641 aa)). The segment at 953-986 (KGLISQQQQQPHHQQQPHQHGQDQARAAYQRPWA) is disordered. Low complexity predominate over residues 958–976 (QQQQQPHHQQQPHQHGQDQ). Asn1097 is a glycosylation site (N-linked (GlcNAc...) asparagine). A disordered region spans residues 1119–1289 (SDKDKDAKKP…SSSSSESKSL (171 aa)). Low complexity-rich tracts occupy residues 1128 to 1149 (PPGS…SSSD) and 1178 to 1192 (SSSS…SDSS). The segment covering 1194–1206 (SPHKHGGAKRQHA) has biased composition (basic residues). Composition is skewed to low complexity over residues 1217–1238 (SHSS…KSFS) and 1253–1286 (SSSS…SSES). The N-linked (GlcNAc...) asparagine glycan is linked to Asn1298. The disordered stretch occupies residues 1308 to 1351 (VPQRKPQTSRRHTPASSSSSSSSSSSSSSSSSSSDSDMTVSAES). Low complexity predominate over residues 1323–1344 (SSSSSSSSSSSSSSSSSSSDSD). A VWFD domain is found at 1564–1732 (SACELNEQSL…SWIAPDETCG (169 aa)). 2 cysteine pairs are disulfide-bonded: Cys1566–Cys1695 and Cys1589–Cys1731. Asn1675 carries an N-linked (GlcNAc...) asparagine glycan.

What corresponds to phosvitin in other species is lost during maturation of vitellogenin to lipovitellin. As to expression, produced by the liver, secreted into the blood and then sequestered by receptor mediated endocytosis into growing oocytes, where it is generally cleaved, giving rise to the respective yolk components lipovitellins 1 and 2.

In terms of biological role, precursor of the major egg-yolk proteins that are sources of nutrients during early development of oviparous organisms. In Ichthyomyzon unicuspis (Silver lamprey), this protein is Vitellogenin.